Reading from the N-terminus, the 174-residue chain is Sarcoplasmic calcium-binding protein (174 aa).

Ser-1 bears the N-acetylserine mark. EF-hand domains follow at residues 3 to 38 (LWVQKMKTYFNRIDFDKDGAITRMDFESMAERFAKE), 55 to 90 (GVWDNFLTAVAGGKGIDETTFINSMKEMVKNPEAKS), 91 to 126 (VVEGPLPLFFRAVDTNEDNNISRDEYGIFFGMLGLD), and 127 to 160 (KTMAPASFDAIDTNNDGLLSLEEFVIAGSDFFMN). Residues Asp-16, Asp-18, Asp-20, and Asp-27 each coordinate Ca(2+). Ca(2+)-binding residues include Asp-104, Asn-106, Asp-108, Asn-110, Glu-115, Asp-138, Asn-140, Asp-142, and Glu-149.

Like parvalbumins, SCPs seem to be more abundant in fast contracting muscles, but no functional relationship can be established from this distribution. The protein is Sarcoplasmic calcium-binding protein of Hediste diversicolor (Sandworm).